The sequence spans 886 residues: Peptidyl-lysine N-acetyltransferase Pat (886 aa).

Residues 487–523 (QPILHAYGLHTLPTWIASDSAEAVHIAEQIGYPVALK) form the ATP-grasp domain. 513–524 (AEQIGYPVALKL) provides a ligand contact to ATP. Residues 726 to 881 (CLFRPILPED…GIVGLTLNLA (156 aa)) enclose the N-acetyltransferase domain.

In the N-terminal section; belongs to the acetate CoA ligase alpha subunit family. This sequence in the central section; belongs to the acetate CoA ligase beta subunit family. As to quaternary structure, monomer in the absence of acetyl-CoA. Oligomerizes to a tetrameric form in the presence of acetyl-CoA.

It catalyses the reaction L-lysyl-[protein] + acetyl-CoA = N(6)-acetyl-L-lysyl-[protein] + CoA + H(+). With respect to regulation, exhibits positive cooperativity. It may be the result of acetyl-CoA binding to two distinct sites, or the result of subunit interactions. In terms of biological role, acetylates and inactivates the acetyl-CoA synthase (Acs). Can also acetylate other central metabolic enzymes in response to environmental changes. This Salmonella typhimurium (strain LT2 / SGSC1412 / ATCC 700720) protein is Peptidyl-lysine N-acetyltransferase Pat (pat).